A 291-amino-acid chain; its full sequence is Phosphoribosylaminoimidazole-succinocarboxamide synthase (291 aa).

This sequence belongs to the SAICAR synthetase family.

The catalysed reaction is 5-amino-1-(5-phospho-D-ribosyl)imidazole-4-carboxylate + L-aspartate + ATP = (2S)-2-[5-amino-1-(5-phospho-beta-D-ribosyl)imidazole-4-carboxamido]succinate + ADP + phosphate + 2 H(+). It participates in purine metabolism; IMP biosynthesis via de novo pathway; 5-amino-1-(5-phospho-D-ribosyl)imidazole-4-carboxamide from 5-amino-1-(5-phospho-D-ribosyl)imidazole-4-carboxylate: step 1/2. This chain is Phosphoribosylaminoimidazole-succinocarboxamide synthase (ADE1), found in Candida maltosa (Yeast).